The following is a 598-amino-acid chain: Thiamine transporter (598 aa).

Residues 1–41 (MSFGSKVSRALRFLEIPVKDRASVSFLKNPDLQPIKSANQT) lie on the Cytoplasmic side of the membrane. The helical transmembrane segment at 42–62 (WGFWSNFAYWGVMSFSVGTWM) threads the bilayer. At 63 to 73 (SASSALGVGLS) the chain is on the extracellular side. Residues 74–94 (YPETIGTFIVGDVLTIIFTLA) traverse the membrane as a helical segment. The Cytoplasmic portion of the chain corresponds to 95 to 111 (NSCPGYDWKVGFTLAQR). A helical transmembrane segment spans residues 112-132 (FVFGIYGSAFGIIIRILMSIV). At 133–173 (NYGSNAWVGGLCINMILDSWSHHYLHLPNTLSSKVAMTTKE) the chain is on the extracellular side. The helical transmembrane segment at 174-194 (LIGFIIFHVLTAFCYLMKPYH) threads the bilayer. Residues 195–197 (MNY) lie on the Cytoplasmic side of the membrane. The chain crosses the membrane as a helical span at residues 198–218 (ILIWSCVATFFSMLGMVIYLA). Over 219–240 (KQAHGVGELFTSTKSTATGSTK) the chain is Extracellular. The chain crosses the membrane as a helical span at residues 241-261 (AWAWVYMISYWFGSVSPGSTN). Over 262-274 (QSDYSRFGSSNWA) the chain is Cytoplasmic. A helical membrane pass occupies residues 275–295 (IWAGTICALLIPTTLIPVFGV). Residues 296-332 (IGASTCDKLYGEQYWMPMDIFNHWLTTNYSAGARAGA) lie on the Extracellular side of the membrane. A helical membrane pass occupies residues 333–353 (FFCGLSFVLSQMSYTISNCGF). At 354–371 (ASGMDLAGLLPKYVDIKR) the chain is on the cytoplasmic side. Residues 372-392 (GALFAACVSWACLPWNFYNSS) traverse the membrane as a helical segment. Over 393 to 394 (ST) the chain is Extracellular. The helical transmembrane segment at 395-415 (FLTVMSSFGVVMTPIISVMIC) threads the bilayer. At 416-446 (DNFLIRKRQYSITNAFILKGEYYFTKGVNWR) the chain is on the cytoplasmic side. A helical transmembrane segment spans residues 447 to 467 (AIVAWVCGMTPGLPGIAWEVN). The Extracellular portion of the chain corresponds to 468–483 (NDYFHNTGIVNFFYGD). Residues 484-504 (SFFSFLISFFVYWGLCLLFPF) form a helical membrane-spanning segment. Residues 505–598 (KITVKHDDKD…QSSTASEKAA (94 aa)) lie on the Cytoplasmic side of the membrane. Phosphoserine is present on Ser560. Residues 574-598 (NTNEFEIVHHKNNEKQSSTASEKAA) are disordered. Polar residues predominate over residues 588-598 (KQSSTASEKAA).

Belongs to the purine-cytosine permease (2.A.39) family.

It is found in the membrane. Its function is as follows. Responsible for intake of thiamine. In Saccharomyces cerevisiae (strain ATCC 204508 / S288c) (Baker's yeast), this protein is Thiamine transporter (THI7).